A 127-amino-acid polypeptide reads, in one-letter code: Large ribosomal subunit protein bL17 (127 aa).

The protein belongs to the bacterial ribosomal protein bL17 family. Part of the 50S ribosomal subunit. Contacts protein L32.

The sequence is that of Large ribosomal subunit protein bL17 from Chromohalobacter salexigens (strain ATCC BAA-138 / DSM 3043 / CIP 106854 / NCIMB 13768 / 1H11).